The sequence spans 288 residues: 4-diphosphocytidyl-2-C-methyl-D-erythritol kinase (288 aa).

The active site involves K8. ATP is bound at residue 90–100 (PFGAGLGGGSS). D132 is a catalytic residue.

This sequence belongs to the GHMP kinase family. IspE subfamily.

It carries out the reaction 4-CDP-2-C-methyl-D-erythritol + ATP = 4-CDP-2-C-methyl-D-erythritol 2-phosphate + ADP + H(+). It participates in isoprenoid biosynthesis; isopentenyl diphosphate biosynthesis via DXP pathway; isopentenyl diphosphate from 1-deoxy-D-xylulose 5-phosphate: step 3/6. Its function is as follows. Catalyzes the phosphorylation of the position 2 hydroxy group of 4-diphosphocytidyl-2C-methyl-D-erythritol. The polypeptide is 4-diphosphocytidyl-2-C-methyl-D-erythritol kinase (Chlorobium chlorochromatii (strain CaD3)).